Here is an 89-residue protein sequence, read N- to C-terminus: Diphthamide biosynthesis protein 3 (89 aa).

One can recognise a DPH-type MB domain in the interval 5 to 61 (FYDEIELEDMSYDDEKDVFHYPCPCGDRFEITRQQLKDAEDVARCPSCSLIIRVVFD). C27, C29, C49, and C52 together coordinate Fe cation.

Belongs to the DPH3 family. As to quaternary structure, component of the 2-(3-amino-3-carboxypropyl)histidine synthase complex composed of DPH1, DPH2, DPH3 and a NADH-dependent reductase, predominantly CBR1. It depends on Fe(2+) as a cofactor.

Its subcellular location is the cytoplasm. The protein localises to the nucleus. The enzyme catalyses [3Fe-4S](1+)-[protein] + Fe(2+)-[Dph3] = [3Fe-4S](0)-[protein] + Fe(3+)-[Dph3]. The catalysed reaction is 2 [3Fe-4S](0)-[protein] + 2 Fe(2+)-[Dph3] + NADH = 2 [4Fe-4S](1+)-[protein] + 2 [Dph3] + NAD(+) + H(+). It functions in the pathway protein modification; peptidyl-diphthamide biosynthesis. Functionally, required for the first step of diphthamide biosynthesis, a post-translational modification of histidine which occurs in elongation factor 2. DPH1 and DPH2 transfer a 3-amino-3-carboxypropyl (ACP) group from S-adenosyl-L-methionine (SAM) to a histidine residue, the reaction is assisted by a reduction system comprising KTI11/DPH3 and a NADH-dependent reductase, predominantly CBR1. Acts as an electron donor to reduce the Fe-S cluster in DPH1-DPH2 keeping the [4Fe-4S] clusters in the active and reduced state. Restores iron to DPH1-DPH2 iron-sulfur clusters which have degraded from [4Fe-4S] to [3Fe-4S] by donating an iron atom to reform [4Fe-4S] clusters, in a manner dependent on the presence of elongation factor 2 and SAM. Associates with the elongator complex and is required for tRNA Wobble base modifications mediated by the elongator complex. The elongator complex is required for multiple tRNA modifications, including mcm5U (5-methoxycarbonylmethyl uridine), mcm5s 2U (5-methoxycarbonylmethyl-2-thiouridine), and ncm5U (5-carbamoylmethyl uridine). This is Diphthamide biosynthesis protein 3 (DPH3) from Mycosarcoma maydis (Corn smut fungus).